The sequence spans 388 residues: Succinate--CoA ligase [ADP-forming] subunit beta (388 aa).

The 236-residue stretch at 9–244 (KQLFAEYGLP…PSQDDAREAH (236 aa)) folds into the ATP-grasp domain. ATP is bound by residues Lys46, 53-55 (GRG), Glu99, Thr102, and Glu107. Residues Asn199 and Asp213 each contribute to the Mg(2+) site. Substrate-binding positions include Asn264 and 321–323 (GIV).

This sequence belongs to the succinate/malate CoA ligase beta subunit family. Heterotetramer of two alpha and two beta subunits. Requires Mg(2+) as cofactor.

It carries out the reaction succinate + ATP + CoA = succinyl-CoA + ADP + phosphate. The enzyme catalyses GTP + succinate + CoA = succinyl-CoA + GDP + phosphate. The protein operates within carbohydrate metabolism; tricarboxylic acid cycle; succinate from succinyl-CoA (ligase route): step 1/1. Functionally, succinyl-CoA synthetase functions in the citric acid cycle (TCA), coupling the hydrolysis of succinyl-CoA to the synthesis of either ATP or GTP and thus represents the only step of substrate-level phosphorylation in the TCA. The beta subunit provides nucleotide specificity of the enzyme and binds the substrate succinate, while the binding sites for coenzyme A and phosphate are found in the alpha subunit. The polypeptide is Succinate--CoA ligase [ADP-forming] subunit beta (Pseudomonas aeruginosa (strain UCBPP-PA14)).